A 176-amino-acid polypeptide reads, in one-letter code: ATP-dependent protease subunit HslV (176 aa).

Thr2 is a catalytic residue. Na(+)-binding residues include Gly157, Cys160, and Thr163.

It belongs to the peptidase T1B family. HslV subfamily. In terms of assembly, a double ring-shaped homohexamer of HslV is capped on each side by a ring-shaped HslU homohexamer. The assembly of the HslU/HslV complex is dependent on binding of ATP.

Its subcellular location is the cytoplasm. The enzyme catalyses ATP-dependent cleavage of peptide bonds with broad specificity.. Its activity is regulated as follows. Allosterically activated by HslU binding. Functionally, protease subunit of a proteasome-like degradation complex believed to be a general protein degrading machinery. The chain is ATP-dependent protease subunit HslV from Escherichia coli O139:H28 (strain E24377A / ETEC).